Here is a 71-residue protein sequence, read N- to C-terminus: Translation initiation factor IF-1 (71 aa).

In terms of domain architecture, S1-like spans 1–71; that stretch reads MSKDDLIQFT…LTKGRVIHRH (71 aa).

It belongs to the IF-1 family. As to quaternary structure, component of the 30S ribosomal translation pre-initiation complex which assembles on the 30S ribosome in the order IF-2 and IF-3, IF-1 and N-formylmethionyl-tRNA(fMet); mRNA recruitment can occur at any time during PIC assembly.

It localises to the cytoplasm. Its function is as follows. One of the essential components for the initiation of protein synthesis. Stabilizes the binding of IF-2 and IF-3 on the 30S subunit to which N-formylmethionyl-tRNA(fMet) subsequently binds. Helps modulate mRNA selection, yielding the 30S pre-initiation complex (PIC). Upon addition of the 50S ribosomal subunit IF-1, IF-2 and IF-3 are released leaving the mature 70S translation initiation complex. The protein is Translation initiation factor IF-1 of Rickettsia akari (strain Hartford).